The sequence spans 621 residues: UvrABC system protein C (621 aa).

Residues 21-100 (AEPGVYLMRD…IKTYQPPYNV (80 aa)) form the GIY-YIG domain. Residues 210–245 (DELIRELKEKMAQAAQQENYEAAARYRDQIRGLEQL) enclose the UVR domain.

This sequence belongs to the UvrC family. In terms of assembly, interacts with UvrB in an incision complex.

It is found in the cytoplasm. Its function is as follows. The UvrABC repair system catalyzes the recognition and processing of DNA lesions. UvrC both incises the 5' and 3' sides of the lesion. The N-terminal half is responsible for the 3' incision and the C-terminal half is responsible for the 5' incision. The polypeptide is UvrABC system protein C (Synechococcus sp. (strain JA-3-3Ab) (Cyanobacteria bacterium Yellowstone A-Prime)).